The following is a 207-amino-acid chain: ATP phosphoribosyltransferase (207 aa).

The protein belongs to the ATP phosphoribosyltransferase family. Short subfamily. As to quaternary structure, heteromultimer composed of HisG and HisZ subunits.

Its subcellular location is the cytoplasm. It carries out the reaction 1-(5-phospho-beta-D-ribosyl)-ATP + diphosphate = 5-phospho-alpha-D-ribose 1-diphosphate + ATP. Its pathway is amino-acid biosynthesis; L-histidine biosynthesis; L-histidine from 5-phospho-alpha-D-ribose 1-diphosphate: step 1/9. Its function is as follows. Catalyzes the condensation of ATP and 5-phosphoribose 1-diphosphate to form N'-(5'-phosphoribosyl)-ATP (PR-ATP). Has a crucial role in the pathway because the rate of histidine biosynthesis seems to be controlled primarily by regulation of HisG enzymatic activity. This chain is ATP phosphoribosyltransferase (hisG), found in Dictyoglomus turgidum (strain DSM 6724 / Z-1310).